The following is a 594-amino-acid chain: DNA ligase 2 (594 aa).

Residue Glu-250 participates in ATP binding. Catalysis depends on Lys-252, which acts as the N6-AMP-lysine intermediate. Positions 257, 273, 303, 343, 419, and 425 each coordinate ATP.

This sequence belongs to the ATP-dependent DNA ligase family. Mg(2+) is required as a cofactor.

It catalyses the reaction ATP + (deoxyribonucleotide)n-3'-hydroxyl + 5'-phospho-(deoxyribonucleotide)m = (deoxyribonucleotide)n+m + AMP + diphosphate.. Its function is as follows. DNA ligase that seals nicks in double-stranded DNA during DNA replication, DNA recombination and DNA repair. The protein is DNA ligase 2 of Korarchaeum cryptofilum (strain OPF8).